Here is a 216-residue protein sequence, read N- to C-terminus: Probable GTP-binding protein EngB (216 aa).

Residues 24 to 205 (QTPELAFVGR…WARIASAATD (182 aa)) form the EngB-type G domain. GTP contacts are provided by residues 32-39 (GRSNVGKS), 59-63 (GRTRA), 86-89 (DLPG), 153-156 (TKMD), and 184-186 (FSA). Mg(2+) is bound by residues Ser-39 and Thr-61.

The protein belongs to the TRAFAC class TrmE-Era-EngA-EngB-Septin-like GTPase superfamily. EngB GTPase family. Mg(2+) serves as cofactor.

In terms of biological role, necessary for normal cell division and for the maintenance of normal septation. This is Probable GTP-binding protein EngB from Anaeromyxobacter sp. (strain Fw109-5).